A 153-amino-acid polypeptide reads, in one-letter code: ATP synthase subunit b' (153 aa).

A helical transmembrane segment spans residues 23 to 40 (LMAIQVVALTYILNSLFF).

The protein belongs to the ATPase B chain family. As to quaternary structure, F-type ATPases have 2 components, F(1) - the catalytic core - and F(0) - the membrane proton channel. F(1) has five subunits: alpha(3), beta(3), gamma(1), delta(1), epsilon(1). F(0) has four main subunits: a(1), b(1), b'(1) and c(10-14). The alpha and beta chains form an alternating ring which encloses part of the gamma chain. F(1) is attached to F(0) by a central stalk formed by the gamma and epsilon chains, while a peripheral stalk is formed by the delta, b and b' chains.

The protein resides in the cellular thylakoid membrane. In terms of biological role, f(1)F(0) ATP synthase produces ATP from ADP in the presence of a proton or sodium gradient. F-type ATPases consist of two structural domains, F(1) containing the extramembraneous catalytic core and F(0) containing the membrane proton channel, linked together by a central stalk and a peripheral stalk. During catalysis, ATP synthesis in the catalytic domain of F(1) is coupled via a rotary mechanism of the central stalk subunits to proton translocation. Its function is as follows. Component of the F(0) channel, it forms part of the peripheral stalk, linking F(1) to F(0). The b'-subunit is a diverged and duplicated form of b found in plants and photosynthetic bacteria. This is ATP synthase subunit b' from Prochlorococcus marinus (strain MIT 9215).